A 221-amino-acid polypeptide reads, in one-letter code: Large ribosomal subunit protein uL3 (221 aa).

The tract at residues 123–156 is disordered; it reads GFAGSIKRHNQSRGPESHGSRYHRRPGSMGPIKG.

The protein belongs to the universal ribosomal protein uL3 family. As to quaternary structure, part of the 50S ribosomal subunit. Forms a cluster with proteins L14 and L19.

One of the primary rRNA binding proteins, it binds directly near the 3'-end of the 23S rRNA, where it nucleates assembly of the 50S subunit. This is Large ribosomal subunit protein uL3 from Aster yellows witches'-broom phytoplasma (strain AYWB).